The chain runs to 71 residues: uncharacterized protein (71 aa).

The N-terminal stretch at 1 to 26 (MIKFSVILGMIRCSLTHITTKNTVNA) is a signal peptide.

This is an uncharacterized protein from Bacillus subtilis (strain 168).